The primary structure comprises 328 residues: Formimidoylglutamase (328 aa).

Positions 133, 159, 161, 163, 253, and 255 each coordinate Mn(2+).

It belongs to the arginase family. Mn(2+) is required as a cofactor.

It catalyses the reaction N-formimidoyl-L-glutamate + H2O = formamide + L-glutamate. Its pathway is amino-acid degradation; L-histidine degradation into L-glutamate; L-glutamate from N-formimidoyl-L-glutamate (hydrolase route): step 1/1. In terms of biological role, catalyzes the conversion of N-formimidoyl-L-glutamate to L-glutamate and formamide. The polypeptide is Formimidoylglutamase (Streptococcus pyogenes serotype M6 (strain ATCC BAA-946 / MGAS10394)).